The following is a 133-amino-acid chain: Protein NrdI (133 aa).

It belongs to the NrdI family.

Probably involved in ribonucleotide reductase function. This is Protein NrdI from Escherichia coli O17:K52:H18 (strain UMN026 / ExPEC).